The primary structure comprises 79 residues: Protein S100-G (79 aa).

The residue at position 2 (Ser-2) is an N-acetylserine. EF-hand domains lie at 13–48 (IFQKYAAKEGDPNQLSKEELKLLIQSEFPSLLKASS) and 45–79 (KASSTLDNLFKELDKNGDGEVSYEEFEVFFKKLSQ). Ca(2+)-binding residues include Gln-26 and Glu-31. A phosphoserine mark is found at Ser-42 and Ser-47. Residues Asp-58, Asn-60, Asp-62, Glu-64, and Glu-69 each coordinate Ca(2+).

This sequence belongs to the S-100 family.

This Rattus norvegicus (Rat) protein is Protein S100-G (S100g).